The following is an 874-amino-acid chain: Alanine--tRNA ligase (874 aa).

Positions 564, 568, 665, and 669 each coordinate Zn(2+).

It belongs to the class-II aminoacyl-tRNA synthetase family. Requires Zn(2+) as cofactor.

The protein resides in the cytoplasm. The enzyme catalyses tRNA(Ala) + L-alanine + ATP = L-alanyl-tRNA(Ala) + AMP + diphosphate. Catalyzes the attachment of alanine to tRNA(Ala) in a two-step reaction: alanine is first activated by ATP to form Ala-AMP and then transferred to the acceptor end of tRNA(Ala). Also edits incorrectly charged Ser-tRNA(Ala) and Gly-tRNA(Ala) via its editing domain. This Burkholderia mallei (strain ATCC 23344) protein is Alanine--tRNA ligase.